A 484-amino-acid polypeptide reads, in one-letter code: Glutamate--tRNA ligase (484 aa).

A 'HIGH' region motif is present at residues 12-22 (PSPTGEPHVGT). The 'KMSKS' region motif lies at 253–257 (KLSKR). K256 contacts ATP.

Belongs to the class-I aminoacyl-tRNA synthetase family. Glutamate--tRNA ligase type 1 subfamily. Monomer.

The protein localises to the cytoplasm. It carries out the reaction tRNA(Glu) + L-glutamate + ATP = L-glutamyl-tRNA(Glu) + AMP + diphosphate. In terms of biological role, catalyzes the attachment of glutamate to tRNA(Glu) in a two-step reaction: glutamate is first activated by ATP to form Glu-AMP and then transferred to the acceptor end of tRNA(Glu). The sequence is that of Glutamate--tRNA ligase from Rhizobium leguminosarum bv. trifolii (strain WSM2304).